Consider the following 560-residue polypeptide: Oxygen-dependent choline dehydrogenase (560 aa).

FAD is bound at residue 8-37 (DYIIIGAGSAGNVLATRLTEDADVSVLLLE). H475 (proton acceptor) is an active-site residue.

This sequence belongs to the GMC oxidoreductase family. Requires FAD as cofactor.

The catalysed reaction is choline + A = betaine aldehyde + AH2. It catalyses the reaction betaine aldehyde + NAD(+) + H2O = glycine betaine + NADH + 2 H(+). Its pathway is amine and polyamine biosynthesis; betaine biosynthesis via choline pathway; betaine aldehyde from choline (cytochrome c reductase route): step 1/1. In terms of biological role, involved in the biosynthesis of the osmoprotectant glycine betaine. Catalyzes the oxidation of choline to betaine aldehyde and betaine aldehyde to glycine betaine at the same rate. The polypeptide is Oxygen-dependent choline dehydrogenase (Stenotrophomonas maltophilia (strain K279a)).